A 2500-amino-acid chain; its full sequence is Non-reducing polyketide synthase atr1 (2500 aa).

The segment at 13–260 is N-terminal acylcarrier protein transacylase domain (SAT); the sequence is VFSPQSKAPK…HNPENANLAL (248 aa). The region spanning 385–808 is the Ketosynthase family 3 (KS3) domain; it reads TDAVAVVGMA…GSNSAVLLCQ (424 aa). Active-site for beta-ketoacyl synthase activity residues include cysteine 557, histidine 692, and histidine 731. The tract at residues 908-1199 is malonyl-CoA:ACP transacylase (MAT) domain; it reads MTFSGQSRQS…EFPERHTFLD (292 aa). The active-site For acyl/malonyl transferase activity is serine 995. The tract at residues 1286–1413 is N-terminal hotdog fold; the sequence is PRLVEPRTKP…GDFGFTTQTQ (128 aa). In terms of domain architecture, PKS/mFAS DH spans 1286 to 1584; the sequence is PRLVEPRTKP…FTKLPITRLE (299 aa). A product template (PT) domain region spans residues 1287 to 1583; the sequence is RLVEPRTKPS…QFTKLPITRL (297 aa). Histidine 1317 (proton acceptor; for dehydratase activity) is an active-site residue. Positions 1433 to 1584 are C-terminal hotdog fold; the sequence is SETLKSKRAY…FTKLPITRLE (152 aa). Aspartate 1495 acts as the Proton donor; for dehydratase activity in catalysis. Residues 1594 to 1649 form a disordered region; that stretch reads AHNTPILKSSQQDSIVSASSSSSTEHSDDDSEDDGSRSPSHSDTSVDSESEAPADN. Low complexity predominate over residues 1602 to 1617; it reads SSQQDSIVSASSSSST. The Carrier domain occupies 1649–1725; the sequence is NGAAKKLKSL…RIVAPEMAAK (77 aa). Residue serine 1683 is modified to O-(pantetheine 4'-phosphoryl)serine. The interval 2164–2496 is thioesterase (TE) domain; it reads KSYRIETMPY…YEFIFDVVGR (333 aa). Catalysis depends on for thioesterase activity residues serine 2285 and aspartate 2434.

The catalysed reaction is 6 malonyl-CoA + 2 acetyl-CoA + 2 S-adenosyl-L-methionine + 3 H(+) = 4-O-demethylbarbatate + 2 S-adenosyl-L-homocysteine + 6 CO2 + 8 CoA + H2O. It participates in secondary metabolite biosynthesis; terpenoid biosynthesis. Its function is as follows. Non-reducing polyketide synthase; part of the gene cluster that mediates the biosynthesis of atranorin, a depside of polyketide origin that accumulates in the cortical or medullary layers of lichen thalli. The first step in the pathway is performed by the non-reducing polyketide synthase atr1 that produces 4-O-demethylbarbatic acid composed of two 3-methylorsellinic acid (3MOA) moieties from S-adenosyl-L-methionine (SAM), acetyl-CoA and malonyl-CoA units. The pathway continues with the actions of the cytochrome P450 monooygenase atr2 that catalizes the oxidation of c-9 and the O-methyltransferase atr3 that performs the methylation of the carboxyl group to yield atranorin, via the proatranorin II and III intermediates if atr2 acts first, or the proatranorin I intermediate if atr3 acts first. In Stereocaulon alpinum (Alpine snow lichen), this protein is Non-reducing polyketide synthase atr1.